The primary structure comprises 692 residues: E3 ubiquitin-protein ligase brl1 (692 aa).

The stretch at 302-370 (SNEEKIESIN…RNERDSLVAK (69 aa)) forms a coiled coil. The RING-type zinc-finger motif lies at 639-679 (CSVCNFSNWKSKLIPNCGHAFCSNCMEPFYEHKTSTCPQCE).

The protein belongs to the BRE1 family. As to quaternary structure, component of the histone H2B ubiquitin ligase complex (HULC) composed of at least brl1, brl2, rhp6 and shf1.

It localises to the nucleus. The catalysed reaction is S-ubiquitinyl-[E2 ubiquitin-conjugating enzyme]-L-cysteine + [acceptor protein]-L-lysine = [E2 ubiquitin-conjugating enzyme]-L-cysteine + N(6)-ubiquitinyl-[acceptor protein]-L-lysine.. It participates in protein modification; protein ubiquitination. In terms of biological role, E3 ubiquitin-protein ligase which belongs to the histone H2B ubiquitin ligase complex (HULC) which mediates monoubiquitination of histone H2B to form H2BK123ub1. H2BK123ub1 gives a specific tag for epigenetic transcriptional activation and is also a prerequisite for H3K4me and H3K79me formation. The polypeptide is E3 ubiquitin-protein ligase brl1 (brl1) (Schizosaccharomyces pombe (strain 972 / ATCC 24843) (Fission yeast)).